Here is a 418-residue protein sequence, read N- to C-terminus: Glutamyl-tRNA reductase (418 aa).

Substrate is bound by residues 49 to 52, Ser107, 112 to 114, and Gln118; these read TCNR and EPQ. Cys50 serves as the catalytic Nucleophile. NADP(+) is bound at residue 187-192; it reads GAGETI.

It belongs to the glutamyl-tRNA reductase family. As to quaternary structure, homodimer.

The enzyme catalyses (S)-4-amino-5-oxopentanoate + tRNA(Glu) + NADP(+) = L-glutamyl-tRNA(Glu) + NADPH + H(+). Its pathway is porphyrin-containing compound metabolism; protoporphyrin-IX biosynthesis; 5-aminolevulinate from L-glutamyl-tRNA(Glu): step 1/2. Catalyzes the NADPH-dependent reduction of glutamyl-tRNA(Glu) to glutamate 1-semialdehyde (GSA). This is Glutamyl-tRNA reductase from Aeromonas salmonicida (strain A449).